The sequence spans 202 residues: Odorant-binding protein 59a (202 aa).

The signal sequence occupies residues 1 to 20 (MKQLIFLLICLSCGTCSIYA). The span at 43 to 53 (HRQDEDEDRGR) shows a compositional bias: basic and acidic residues. The tract at residues 43 to 105 (HRQDEDEDRG…QSDGRNHTSN (63 aa)) is disordered. The segment covering 54-65 (GGQGRQGNGYEY) has biased composition (gly residues).

The protein belongs to the PBP/GOBP family. As to expression, expressed in non-neuronal cells in hygrosensitive sensilla in the second chamber of the sacculus of the antenna third segment (at protein level).

The protein resides in the secreted. Its function is as follows. Odorant-binding protein required for hygrotaxis behavior in humidity-detecting sensilla. The sequence is that of Odorant-binding protein 59a from Drosophila melanogaster (Fruit fly).